A 128-amino-acid polypeptide reads, in one-letter code: Large ribosomal subunit protein bL17 (128 aa).

Belongs to the bacterial ribosomal protein bL17 family. In terms of assembly, part of the 50S ribosomal subunit. Contacts protein L32.

The chain is Large ribosomal subunit protein bL17 from Pseudomonas savastanoi pv. phaseolicola (strain 1448A / Race 6) (Pseudomonas syringae pv. phaseolicola (strain 1448A / Race 6)).